The chain runs to 107 residues: uncharacterized protein (107 aa).

The tract at residues 86–107 is disordered; that stretch reads QVSNHEEDADVLETQDDNAEQV. The segment covering 92-107 has biased composition (acidic residues); the sequence is EDADVLETQDDNAEQV.

This is an uncharacterized protein from Rickettsia prowazekii (strain Madrid E).